We begin with the raw amino-acid sequence, 52 residues long: Defensin-like protein 2B (52 aa).

Cystine bridges form between Cys-4–Cys-52, Cys-16–Cys-37, Cys-22–Cys-46, and Cys-26–Cys-48.

Forms oligomers in its native state.

In terms of biological role, possesses antifungal activity sensitive to inorganic cations. In Sinapis alba (White mustard), this protein is Defensin-like protein 2B.